Here is a 459-residue protein sequence, read N- to C-terminus: Prenyltransferase penI (459 aa).

L-tryptophan contacts are provided by residues 107-108 and glutamate 111; that span reads VV. Residues arginine 126, arginine 276, lysine 278, tyrosine 280, and tyrosine 384 each coordinate substrate.

This sequence belongs to the tryptophan dimethylallyltransferase family.

It carries out the reaction quinolinone B + dimethylallyl diphosphate = peniprequinolone + diphosphate. Its pathway is secondary metabolite biosynthesis. The protein operates within alkaloid biosynthesis. It participates in mycotoxin biosynthesis. Its function is as follows. Prenyltransferase; part of the gene cluster that mediates the biosynthesis of penigequinolones, potent insecticidal alkaloids that contain a highly modified 10-carbon prenyl group. The first stage is catalyzed by the nonribosomal peptide synthetase penN that condenses anthranilic acid and O-methyl-L-tyrosine to produce 4'-methoxycyclopeptin. 4'-methoxycyclopeptin is then converted to 4'-methoxydehydrocyclopeptin by the ketoglutarate-dependent dioxygenase penM through dehydrogenation to form a double bond between C-alpha and C-beta of the O-methyltyrosine side chain. PenM also converts its first product methoxydehydrocyclopeptin to 4'-methoxycyclopenin. The following conversion of 4'methoxycyclopenin into 4'-methoxyviridicatin is catalyzed by the cyclopenase penL. 4'-methoxyviridicatin is the precursor of quinolone natural products, and is further converted to quinolinone B. The prenyltransferase penI then catalyzes the canonical Friedel-Crafts alkylation of quinolinone B with dimethylallyl cation to yield dimethylallyl quinolone, which is subjected to FAD-dependent dehydrogenation by the FAD-linked oxidoreductase penH to yield conjugated aryl diene. The delta(3') double bond then serves as the site of the second alkylation with DMAPP catalyzed by the prenyltransferase penG to yield a carbenium ion intermediate, which can be attacked by H(2)O to yield a styrenyl quinolone containing a C3'-hydroxyprenyl chain, or undergo cyclization to yield yaequinolones J1 and J2. The conversion of the styrenyl quinolone into the tetrahydrofuran-containing yaequinolone C is performed by the FAD-dependent monooxygenase penE and involves epoxidation of the terminal C7'-C8' olefin, followed by epoxide ring opening initiated by the C3' hydroxyl group. The predicted cysteine hydrolase penJ acts as an epoxide hydrolase that enhances the rate of the 5-exo-tet cyclization step, increasing the yield of yaequinolone C. PenF catalyzes the cationic rearrangement of the epoxide formed by penE (before ring opening to produce yaequinolone C) into yaequinolone D. Finally, the short-chain dehydrogenase/reductase (SDR)-like reductase penD, catalyzes both the dehydration of yaequinolone D and the reduction of the resulting oxonium to yield penigequinolone. This is Prenyltransferase penI from Penicillium thymicola.